The primary structure comprises 557 residues: Dihydroxy-acid dehydratase (557 aa).

D78 provides a ligand contact to Mg(2+). Position 119 (C119) interacts with [2Fe-2S] cluster. D120 and K121 together coordinate Mg(2+). N6-carboxylysine is present on K121. C192 serves as a coordination point for [2Fe-2S] cluster. E443 is a Mg(2+) binding site. Residue S469 is the Proton acceptor of the active site.

The protein belongs to the IlvD/Edd family. In terms of assembly, homodimer. [2Fe-2S] cluster serves as cofactor. It depends on Mg(2+) as a cofactor.

It carries out the reaction (2R)-2,3-dihydroxy-3-methylbutanoate = 3-methyl-2-oxobutanoate + H2O. The catalysed reaction is (2R,3R)-2,3-dihydroxy-3-methylpentanoate = (S)-3-methyl-2-oxopentanoate + H2O. It functions in the pathway amino-acid biosynthesis; L-isoleucine biosynthesis; L-isoleucine from 2-oxobutanoate: step 3/4. Its pathway is amino-acid biosynthesis; L-valine biosynthesis; L-valine from pyruvate: step 3/4. In terms of biological role, functions in the biosynthesis of branched-chain amino acids. Catalyzes the dehydration of (2R,3R)-2,3-dihydroxy-3-methylpentanoate (2,3-dihydroxy-3-methylvalerate) into 2-oxo-3-methylpentanoate (2-oxo-3-methylvalerate) and of (2R)-2,3-dihydroxy-3-methylbutanoate (2,3-dihydroxyisovalerate) into 2-oxo-3-methylbutanoate (2-oxoisovalerate), the penultimate precursor to L-isoleucine and L-valine, respectively. The protein is Dihydroxy-acid dehydratase of Sulfurihydrogenibium sp. (strain YO3AOP1).